A 204-amino-acid polypeptide reads, in one-letter code: Thymidylate kinase (204 aa).

Residue 9–16 (GLDGAGKS) participates in ATP binding.

Belongs to the thymidylate kinase family.

The enzyme catalyses dTMP + ATP = dTDP + ADP. Functionally, phosphorylation of dTMP to form dTDP in both de novo and salvage pathways of dTTP synthesis. The sequence is that of Thymidylate kinase from Francisella philomiragia subsp. philomiragia (strain ATCC 25017 / CCUG 19701 / FSC 153 / O#319-036).